A 264-amino-acid polypeptide reads, in one-letter code: MATRTADKLEKKLVVVVGGTSGLGFAVAQAAVDRKANVVVASSKQASVDDALSRLQAGLASDDDVARVRGLTLDLAAANVEEQIVALYDFASKNGQQKIDHIAVTAGDSLYPKALDQVKAEDFINASQVRVIGALLLAKHAAKYLAKSAASSFTLTSGVRDVRPAANFAPVAPVSAAVKSLAKTLAHDLAPIRVNSISPGAVRTEFFTKIAGEHADAVLQGLAEQTLTKSNGVAEDIAEIYLVVMTSAYIDGADLVADGGSLIA.

A helical membrane pass occupies residues 13 to 32; the sequence is LVVVVGGTSGLGFAVAQAAV. Leu23, Ser43, and Asp74 together coordinate NADP(+). Asn125 is a glycosylation site (N-linked (GlcNAc...) asparagine). Residues Arg130 and Lys139 each contribute to the NADP(+) site. Ser157 (proton donor) is an active-site residue. The NADP(+) site is built by Val202 and Thr204.

Belongs to the short-chain dehydrogenases/reductases (SDR) family. The cofactor is NADP(+).

It is found in the membrane. Its pathway is mycotoxin biosynthesis. Functionally, short-chain dehydrogenase/reductase; part of the gene cluster that mediates the biosynthesis of UCS1025A, a member of the pyrrolizidinone family that acts as a strong telomerase inhibitor and displays potent antibacterial and antitumor properties. These compounds share a hemiaminal-containing pyrrolizidinone core fused with a gamma-lactone, giving a furopyrrolizidine that is connected to a decalin fragment. The polyketide synthase module (PKS) of the PKS-NRPS ucsA is responsible for the synthesis of the polyketide backbone via the condensation of an acetyl-CoA starter unit with 6 malonyl-CoA units. The downstream nonribosomal peptide synthetase (NRPS) module then amidates the carboxyl end of the polyketide with a 2S,3S-methylproline derived from L-isoleucine by the 2-oxoglutarate-dependent dioxygenase ucsF which converts L-isoleucine to (4S,5S)-4-methylpyrroline-5-carboxylate that is further converted to 2S,3S-methylproline by the pyrroline-5-carboxylate reductase ucsG. Reductive release of the completed aminoacyl polyketide from the assembly line can form the 3-pyrrolin-2-one structure via an intramolecular Knoevenagel reaction. Because ucsA lacks a designated enoylreductase (ER) domain, the required activity is provided the enoyl reductase ucsL. This keto acyclic precursor is the substrate of the Diels-Alderase ucsH, that catalyzes the Diels-Alder cycloaddition. Oxidation of the 3S-methyl group to a carboxylate by the cytochrome P450 monooxygenase ucsK allows an oxa-Michael cyclization that might involve the reductase/dehydrogenase ucsI and which furnishes the furopyrrolizidine. The oxidase ucsJ likely plays a critical role in stereoselective reduction of the C5-C6 double bond to afford the required R-configured carboxylate group. Further enolization and oxidation at C5 by an unidentified enzyme affords the last intermediate that can undergo oxa-Michael cyclization to yield UCS1025A. This chain is Short-chain dehydrogenase/reductase ucsE, found in Acremonium sp.